Reading from the N-terminus, the 103-residue chain is O2 contryphan Vc1 (103 aa).

An N-terminal signal peptide occupies residues 1–23; the sequence is MGKLTILFLVAAALLSTQVMVQG. A propeptide spanning residues 24–67 is cleaved from the precursor; the sequence is DGAHERTEAEEPQHHGAKRQDGTGGYPVDDVDMMQRIFRTPLKR. A compositionally biased stretch (basic and acidic residues) spans 25-44; that stretch reads GAHERTEAEEPQHHGAKRQD. Positions 25-50 are disordered; sequence GAHERTEAEEPQHHGAKRQDGTGGYP. Position 68 is a pyrrolidone carboxylic acid (Gln-68). Cys-70 and Cys-83 are oxidised to a cystine. Residues 99–103 constitute a propeptide that is removed on maturation; that stretch reads RRGRQ.

Belongs to the O2 superfamily. Post-translationally, pyrrolidone carboxylic acid at position 1 has no significant effect on the structure of contryphan-Vc1. As to expression, expressed by the venom gland.

Its subcellular location is the secreted. In terms of biological role, unknown. Intracranial injection of the peptide into mice does not produce toxic effects. In addition, the peptide does not produce any observable changes to normal or depolarization-induced intracellular calcium levels in mouse dorsal root ganglion cells. The chain is O2 contryphan Vc1 from Conus victoriae (Queen Victoria cone).